Reading from the N-terminus, the 390-residue chain is Sulfate adenylyltransferase (390 aa).

This sequence belongs to the sulfate adenylyltransferase family.

The catalysed reaction is sulfate + ATP + H(+) = adenosine 5'-phosphosulfate + diphosphate. It functions in the pathway sulfur metabolism; hydrogen sulfide biosynthesis; sulfite from sulfate: step 1/3. This is Sulfate adenylyltransferase (sat) from Synechocystis sp. (strain ATCC 27184 / PCC 6803 / Kazusa).